Reading from the N-terminus, the 119-residue chain is Large ribosomal subunit protein bL20c (119 aa).

This sequence belongs to the bacterial ribosomal protein bL20 family.

Its subcellular location is the plastid. The protein localises to the chloroplast. Its function is as follows. Binds directly to 23S ribosomal RNA and is necessary for the in vitro assembly process of the 50S ribosomal subunit. It is not involved in the protein synthesizing functions of that subunit. The protein is Large ribosomal subunit protein bL20c (rpl20) of Zea mays (Maize).